The following is a 239-amino-acid chain: 1-(5-phosphoribosyl)-5-[(5-phosphoribosylamino)methylideneamino] imidazole-4-carboxamide isomerase (239 aa).

Residue D8 is the Proton acceptor of the active site. Catalysis depends on D130, which acts as the Proton donor.

This sequence belongs to the HisA/HisF family.

The protein localises to the cytoplasm. The catalysed reaction is 1-(5-phospho-beta-D-ribosyl)-5-[(5-phospho-beta-D-ribosylamino)methylideneamino]imidazole-4-carboxamide = 5-[(5-phospho-1-deoxy-D-ribulos-1-ylimino)methylamino]-1-(5-phospho-beta-D-ribosyl)imidazole-4-carboxamide. The protein operates within amino-acid biosynthesis; L-histidine biosynthesis; L-histidine from 5-phospho-alpha-D-ribose 1-diphosphate: step 4/9. The protein is 1-(5-phosphoribosyl)-5-[(5-phosphoribosylamino)methylideneamino] imidazole-4-carboxamide isomerase of Lachnoclostridium phytofermentans (strain ATCC 700394 / DSM 18823 / ISDg) (Clostridium phytofermentans).